The sequence spans 180 residues: ATP-dependent protease subunit HslV (180 aa).

The active site involves Thr5. Na(+) contacts are provided by Gly161, Cys164, and Thr167.

Belongs to the peptidase T1B family. HslV subfamily. As to quaternary structure, a double ring-shaped homohexamer of HslV is capped on each side by a ring-shaped HslU homohexamer. The assembly of the HslU/HslV complex is dependent on binding of ATP.

Its subcellular location is the cytoplasm. The catalysed reaction is ATP-dependent cleavage of peptide bonds with broad specificity.. With respect to regulation, allosterically activated by HslU binding. Its function is as follows. Protease subunit of a proteasome-like degradation complex believed to be a general protein degrading machinery. The protein is ATP-dependent protease subunit HslV of Campylobacter jejuni subsp. jejuni serotype O:2 (strain ATCC 700819 / NCTC 11168).